We begin with the raw amino-acid sequence, 512 residues long: MEGSLELSSEAILRFLAERGGRAGHSELVQHFRDVLGGQREQRTRARERFKELVNAVATVRTDPADGTKYVHLKKRFCTGDSPPLEAKLPREPPRIEVTEEPQVPDLAAEPCEGSQLQEANPQLSLGLGGEVSDQEPPAPAQGGAQGKDSPPQEVEAVSWASGPGSSENLKLPPQGEAEGGSSPSGPNTPRSARQNFRDLVLGSSPQLKRSVGPGDGNAGGRSRGGGDSDTASLASSSAEEESSVGASVTLDPLDHAWMLSASEGKWDSLEGLLTCEPGLLSKRDFITGFTCLHWAAKHGRQELLAMLVNFATKHQLPVNINAKSSGGYTALHLAAMHGHVEVVKLLVGAYDADVDIRDYSGRKASQYLSESIAEEIKNLVGALDEDDGDSPAARGGGRWRLSKVLPSHITHKLSPVVEDGAELHHHVPEGWTGGSKAKDSGRKASGSSSGRMKPRLNKIRFRTQIIHTTPSFRDAKPTLEEGEEEEEEEEERSLRGYSSSFKLRPKSNVFG.

2 positions are modified to phosphoserine: Ser-82 and Ser-125. The tract at residues 126 to 248 (LGLGGEVSDQ…AEEESSVGAS (123 aa)) is disordered. A compositionally biased stretch (low complexity) spans 173-186 (PPQGEAEGGSSPSG). A Phosphoserine modification is found at Ser-205. The span at 214-228 (PGDGNAGGRSRGGGD) shows a compositional bias: gly residues. Over residues 229–248 (SDTASLASSSAEEESSVGAS) the composition is skewed to low complexity. 2 ANK repeats span residues 288-317 (TGFT…KHQL) and 327-357 (GGYT…DVDI). At Arg-395 the chain carries Omega-N-methylarginine. Residues 427–500 (HVPEGWTGGS…EERSLRGYSS (74 aa)) are disordered. Positions 453 to 462 (MKPRLNKIRF) are enriched in basic residues. Residues 481–492 (EEGEEEEEEEEE) show a composition bias toward acidic residues.

This sequence belongs to the SOWAH family.

In Mus musculus (Mouse), this protein is Ankyrin repeat domain-containing protein SOWAHC (Sowahc).